Consider the following 543-residue polypeptide: Cytochrome P450 1B1 (543 aa).

Cys470 contacts heme.

Belongs to the cytochrome P450 family. The cofactor is heme. Constitutively expressed in retinal and kidney pericytes cells. Expressed in retinal endothelial cells (at protein level). Expressed in cardiac, pulmonary and aortic endothelial cells. Constitutively expressed in trabecular meshwork of the eye (at protein level).

Its subcellular location is the endoplasmic reticulum membrane. It is found in the microsome membrane. The protein resides in the mitochondrion. It carries out the reaction an organic molecule + reduced [NADPH--hemoprotein reductase] + O2 = an alcohol + oxidized [NADPH--hemoprotein reductase] + H2O + H(+). It catalyses the reaction 17beta-estradiol + reduced [NADPH--hemoprotein reductase] + O2 = 2-hydroxy-17beta-estradiol + oxidized [NADPH--hemoprotein reductase] + H2O + H(+). The enzyme catalyses 17beta-estradiol + reduced [NADPH--hemoprotein reductase] + O2 = 4-hydroxy-17beta-estradiol + oxidized [NADPH--hemoprotein reductase] + H2O + H(+). The catalysed reaction is estrone + reduced [NADPH--hemoprotein reductase] + O2 = 2-hydroxyestrone + oxidized [NADPH--hemoprotein reductase] + H2O + H(+). It carries out the reaction estrone + reduced [NADPH--hemoprotein reductase] + O2 = 4-hydroxyestrone + oxidized [NADPH--hemoprotein reductase] + H2O + H(+). It catalyses the reaction testosterone + reduced [NADPH--hemoprotein reductase] + O2 = 6beta,17beta-dihydroxyandrost-4-en-3-one + oxidized [NADPH--hemoprotein reductase] + H2O + H(+). The enzyme catalyses progesterone + reduced [NADPH--hemoprotein reductase] + O2 = 6beta-hydroxyprogesterone + oxidized [NADPH--hemoprotein reductase] + H2O + H(+). The catalysed reaction is progesterone + reduced [NADPH--hemoprotein reductase] + O2 = 16alpha-hydroxyprogesterone + oxidized [NADPH--hemoprotein reductase] + H2O + H(+). It carries out the reaction all-trans-retinol + reduced [NADPH--hemoprotein reductase] + O2 = all-trans-retinal + oxidized [NADPH--hemoprotein reductase] + 2 H2O + H(+). It catalyses the reaction all-trans-retinal + reduced [NADPH--hemoprotein reductase] + O2 = all-trans-retinoate + oxidized [NADPH--hemoprotein reductase] + H2O + 2 H(+). The enzyme catalyses (5Z,8Z,11Z,14Z)-eicosatetraenoate + reduced [NADPH--hemoprotein reductase] + O2 = (8R,9S)-epoxy-(5Z,11Z,14Z)-eicosatrienoate + oxidized [NADPH--hemoprotein reductase] + H2O + H(+). The catalysed reaction is (5Z,8Z,11Z,14Z)-eicosatetraenoate + reduced [NADPH--hemoprotein reductase] + O2 = (11R,12S)-epoxy-(5Z,8Z,14Z)-eicosatrienoate + oxidized [NADPH--hemoprotein reductase] + H2O + H(+). It carries out the reaction (5Z,8Z,11Z,14Z)-eicosatetraenoate + reduced [NADPH--hemoprotein reductase] + O2 = (11S,12R)-epoxy-(5Z,8Z,14Z)-eicosatrienoate + oxidized [NADPH--hemoprotein reductase] + H2O + H(+). It catalyses the reaction (5Z,8Z,11Z,14Z)-eicosatetraenoate + reduced [NADPH--hemoprotein reductase] + O2 = (14R,15S)-epoxy-(5Z,8Z,11Z)-eicosatrienoate + oxidized [NADPH--hemoprotein reductase] + H2O + H(+). The enzyme catalyses (5S)-hydroperoxy-(6E,8Z,11Z,14Z)-eicosatetraenoate = 5-oxo-(6E,8Z,11Z,14Z)-eicosatetraenoate + H2O. The catalysed reaction is (12S)-hydroperoxy-(5Z,8Z,10E,14Z)-eicosatetraenoate = 12-oxo-(5Z,8Z,10E,14Z)-eicosatetraenoate + H2O. It carries out the reaction (13S)-hydroperoxy-(9Z,11E)-octadecadienoate = 13-oxo-(9Z,11E)-octadecadienoate + H2O. It catalyses the reaction (15S)-hydroperoxy-(5Z,8Z,11Z,13E)-eicosatetraenoate = 15-oxo-(5Z,8Z,11Z,13E)-eicosatetraenoate + H2O. The protein operates within steroid hormone biosynthesis. It participates in cofactor metabolism; retinol metabolism. It functions in the pathway lipid metabolism; arachidonate metabolism. Its activity is regulated as follows. Enzyme activity is increased by cytochrome b5. Enzyme activity is increased by liposomes containing anionic phospholipids, phosphatidic acid and cardiolipin. Inhibited by naringenin with an IC(50) of 5 uM. A cytochrome P450 monooxygenase involved in the metabolism of various endogenous substrates, including fatty acids, steroid hormones and vitamins. Mechanistically, uses molecular oxygen inserting one oxygen atom into a substrate, and reducing the second into a water molecule, with two electrons provided by NADPH via cytochrome P450 reductase (NADPH--hemoprotein reductase). Exhibits catalytic activity for the formation of hydroxyestrogens from 17beta-estradiol (E2), namely 2- and 4-hydroxy E2. Metabolizes testosterone and progesterone to B or D ring hydroxylated metabolites. May act as a major enzyme for all-trans retinoic acid biosynthesis in extrahepatic tissues. Catalyzes two successive oxidative transformation of all-trans retinol to all-trans retinal and then to the active form all-trans retinoic acid. Catalyzes the epoxidation of double bonds of certain PUFA. Converts arachidonic acid toward epoxyeicosatrienoic acid (EpETrE) regioisomers, 8,9-, 11,12-, and 14,15- EpETrE, that function as lipid mediators in the vascular system. Additionally, displays dehydratase activity toward oxygenated eicosanoids hydroperoxyeicosatetraenoates (HpETEs). This activity is independent of cytochrome P450 reductase, NADPH, and O2. Also involved in the oxidative metabolism of xenobiotics, particularly converting polycyclic aromatic hydrocarbons and heterocyclic aryl amines procarcinogens to DNA-damaging products. Plays an important role in retinal vascular development. Under ambient/hyperoxic O2 conditions, promotes angiogenesis and capillary morphogenesis of retinal endothelial cells and pericytes, likely by metabolizing the oxygenated products symptomatic of oxidative stress. Also, contributes to oxidative homeostasis and ultrastructural organization and function of trabecular meshwork tissue through modulation of POSTN expression. This Mus musculus (Mouse) protein is Cytochrome P450 1B1.